The primary structure comprises 74 residues: CLAVATA3/ESR (CLE)-related protein 1 (74 aa).

The first 22 residues, 1–22 (MANLKFLLCLFLICVSLSRSSA), serve as a signal peptide directing secretion. Asn59 carries an N-linked (GlcNAc...) asparagine glycan. A hydroxyproline mark is found at Pro66 and Pro69. Pro69 carries O-linked (Ara...) hydroxyproline glycosylation.

It belongs to the CLV3/ESR signal peptide family. Post-translationally, the O-glycosylation (arabinosylation) of the hydroxyproline Pro-69 enhances binding affinity of the CLE1p peptide for its receptor. In terms of tissue distribution, mostly expressed in roots and seedlings, and, to a lower extent, in stems and apex.

It is found in the secreted. The protein localises to the extracellular space. In terms of biological role, extracellular signal peptide that regulates cell fate. This Arabidopsis thaliana (Mouse-ear cress) protein is CLAVATA3/ESR (CLE)-related protein 1.